Here is a 5206-residue protein sequence, read N- to C-terminus: Multifunctional-autoprocessing repeats-in-toxin (5206 aa).

Residues 1-19 (MGKPFWRSVEYFFTGNYSA) form the signal peptide. RtxA repeat units lie at residues 101–118 (GAAGGVSIDHLGNNGDVS), 121–138 (GAAAYNGITRKGLSGNVT), 141–157 (GAGGYNALWHETNQGNL), 161–184 (GAGAGNKLDRTWFNRYQGSRGDVT), 187–204 (GAGAANSISSRVETGNIT), 207–224 (GAGADNHLVRKGKVGDIT), 255–272 (GVGGYNSLYSDVAHGDIH), 275–291 (GGGAYNTITRKGSGSSF), 584–601 (GAGGGNVIKSNVTRGNVY), 604–620 (GGGIANVILHSSQFGNT), 624–641 (GGGAANVIVKSGEEGDLT), 644–658 (GAGLANVLVHQSKQG), 741–753 (AGGANVLTKVGDG), 759–771 (MLGGANVITHISG), 782–798 (ALGGANILTKKGKGNTL), 801–816 (MGGGANVLTHVGDGTT), 820–835 (MVGGANILTKVGNGDT), 841–855 (GVGNVLTHVGDGQTL), 858–875 (MGAAGNIFTKVGDGTSIA), 877–891 (MIGAGNIFTHVGEGN), 896–910 (MGGLGNVFTKVGNGD), 915–932 (MVAEANVFTHIGDGMSVA), 934–950 (MLAKGNVATKVGNGTTL), 972–984 (MIGQANIMTKVGN), 991–1006 (MVGKANIYTHVGDGTS), 1031–1043 (GKANIMTHVGDGL), 1067–1079 (AAAKANVVTHVGD), 1087–1102 (AGKGNILTKVGEGTTV), 1110–1122 (GNVMTHVGDGTTI), 1125–1142 (AKGKANIITKVGDGLGVN), 1145–1159 (WGQANVFTQVGDGDR), 1163–1179 (AKGEANIITKVGDGKEV), 1184–1199 (GKANIITHVGNGDDYT), 1201–1217 (AWGKANVITKVGNGRNV), 1220–1236 (AKGEANIVTQVGDGDSF), 1242–1256 (KGNIVTKVGDGMQVT), 1258–1275 (AKGKANITTTVGDGLSVT), 1296–1313 (AWGKYNINTKVGDGLNVA), and 1315–1332 (MKGKANANIHVGDGLNIN). A compositionally biased stretch (polar residues) spans 1606–1626 (SQQANAVSEHATQNQASQNAL). Disordered stretches follow at residues 1606-1682 (SQQA…ESEA) and 1738-1895 (IAAA…EQEA). The segment covering 1627–1646 (SDKERAEADRQRLEQEKQKQ) has biased composition (basic and acidic residues). A compositionally biased stretch (polar residues) spans 1652-1671 (GSQSQLESTDQQALGNNGQA). Over residues 1778 to 1805 (AEAKADAETRKADAVAKSNDAKQAESDA) the composition is skewed to basic and acidic residues. The segment covering 1825 to 1834 (NKANQAQNDA) has biased composition (polar residues). Positions 1835-1849 (KGTKQNEGDRPDREG) are enriched in basic and acidic residues. Residues 1870-1880 (SHITTDSQTNA) show a composition bias toward polar residues. The tract at residues 2377–2461 (ELMSVTELLD…SLLNQVNSRL (85 aa)) is membrane localization region (MLD). The rho inactivation domain (RID) stretch occupies residues 2537–2901 (EYGQVVADTI…HQVTDVLDAL (365 aa)). The segment at 2998–3113 (VVLFLHGSGS…MPSMTKAITA (116 aa)) is ABH effector region. The region spanning 4111–4295 (PTADGGESRF…AENNKVSLSW (185 aa)) is the Peptidase C80 domain. 1D-myo-inositol hexakisphosphate contacts are provided by residues 4117 to 4119 (ESR), 4144 to 4145 (KH), and Arg-4175. Residue His-4181 is the For cysteine protease activity of the active site. Ser-4226 is a binding site for 1D-myo-inositol hexakisphosphate. Cys-4230 acts as the Nucleophile; for cysteine protease activity in catalysis. 1D-myo-inositol hexakisphosphate contacts are provided by residues 4259–4261 (SVR), 4272–4273 (RK), Lys-4285, and Lys-4290. 2 disordered regions span residues 4333 to 4362 (GAIGDNNDVFDAPEKRKAETETSSSSANNK) and 4738 to 4779 (LKEK…ETPD). Residues 4750–4762 (SSVSVNGASVNSA) show a composition bias toward low complexity.

The cofactor is Mg(2+).

It localises to the secreted. It is found in the host cytoplasm. The protein resides in the host cytosol. Its subcellular location is the host cell membrane. The catalysed reaction is L-lysyl-/S-(2E,6E,10E)-geranylgeranyl-L-cysteinyl-[protein] + hexadecanoyl-CoA = N(6)-hexadecanoyl-L-lysyl-/S-(2E,6E,10E)-geranylgeranyl-L-cysteinyl-[protein] + CoA + H(+). It catalyses the reaction L-lysyl-/S-(2E,6E,10E)-geranylgeranyl-L-cysteinyl-[protein] + dodecanoyl-CoA = N(6)-dodecanoyl-L-lysyl-/S-(2E,6E,10E)-geranylgeranyl-L-cysteinyl-[protein] + CoA + H(+). The enzyme catalyses L-lysyl-/S-(2E,6E,10E)-geranylgeranyl-L-cysteinyl-[protein] + decanoyl-CoA = N(6)-decanoyl-L-lysyl-/S-(2E,6E,10E)-geranylgeranyl-L-cysteinyl-[protein] + CoA + H(+). Precursor of a multifunctional toxin that causes destruction of the actin cytoskeleton by covalent cross-linking of actin and inactivation of Rho GTPases when translocated into the host cytoplasm. Upon translocation into the host cell, undergoes autoprocessing in cis mediated by the peptidase C80 domain (also named CPD domain): the protease activity is activated upon binding inositol hexakisphosphate (InsP6) present at the host cell membrane and delivers the Cysteine protease domain-containing toxin F3 chain to the host cytosol. The Cysteine protease domain-containing toxin F3 chain will then further cleave and release effector toxin chains that cause disassembly of the actin cytoskeleton and enhance V.vulnificus colonization of the small intestine, possibly by facilitating evasion of phagocytic cells. In terms of biological role, following autocatalytic cleavage in cis, this chain mediates processing in trans to release other individual toxin chains to the host cytosol. Released effector toxin chains cause disassembly of the actin cytoskeleton and enhance V.vulnificus colonization of the small intestine, possibly by facilitating evasion of phagocytic cells. Its function is as follows. Actin-directed toxin that catalyzes the covalent cross-linking of host cytoplasmic monomeric actin. Mediates the cross-link between 'Lys-50' of one monomer and 'Glu-270' of another actin monomer, resulting in formation of highly toxic actin oligomers that cause cell rounding. The toxin can be highly efficient at very low concentrations by acting on formin homology family proteins: toxic actin oligomers bind with high affinity to formins and adversely affect both nucleation and elongation abilities of formins, causing their potent inhibition in both profilin-dependent and independent manners. Acts as an acid--amino-acid ligase that transfers the gamma-phosphoryl group of ATP to the 'Glu-270' actin residue, resulting in the formation of an activated acyl phosphate intermediate. This intermediate is further hydrolyzed and the energy of hydrolysis is utilized for the formation of the amide bond between actin subunits. Functionally, N-epsilon-fatty acyltransferase that mediates lysine-palmitoylation of host Rho GTPase proteins, with a strong preference for host Rac1. After delivery to the host cytosol, localizes to the host cell membrane where it palmitoylates host Rho GTPase proteins, resulting in loss of all active GTP-bound Rho and subsequent actin depolymerization. Prenylation of host Rac1 at the C-terminus is required for lysine-palmitoylation. Indirectly activates the small GTPase CDC42. This Vibrio vulnificus protein is Multifunctional-autoprocessing repeats-in-toxin.